A 546-amino-acid polypeptide reads, in one-letter code: MMMASKDAPQSADGASGAGQLVPEVNTADPLPMEPVAGPTTAVATAGQVNMIDPWIVNNFVQSPQGEFTISPNNTPGDILFDLQLGPHLNPFLSHLSQMYNGWVGNMRVRILLAGNAFSAGKIIVCCVPPGFTSSSLTIAQATLFPHVIADVRTLEPIEMPLEDVRNVLYHTNDNQPTMRLVCMLYTPLRTGGGSGNSDSFVVAGRVLTAPSSDFSFLFLVPPTIEQKTRAFTVPNIPLQTLSNSRFPSLIQGMILSPDASQVVQFQNGRCLIDGQLLGTTPATSGQLFRVRGKINQGARTLNLTEVDGKPFMAFDSPAPVGFPDFGKCDWHMRISKTPNNTGSGDPMRSVSVQTNVQGFVPHLGSIQFDEVFNHPTGDYIGTIEWISQPSTPPGTDINLWEIPDYGSSLSQAANLAPPVFPPGFGEALVYFVSAFPGPNNRSAPNDVPCLLPQEYITHFVSEQAPTMGDAALLHYVDPDTNRNLGEFKLYPGGYLTCVPNGVGAGPQQLPLNGVFLFVSWVSRFYQLKPVGTASTARGRLGVRRI.

A disordered region spans residues 1 to 38; the sequence is MMMASKDAPQSADGASGAGQLVPEVNTADPLPMEPVAG. Residues 1-226 are shell domain; it reads MMMASKDAPQ…FLFLVPPTIE (226 aa). The interval 227-279 is P1 sub-domain 1; sequence QKTRAFTVPNIPLQTLSNSRFPSLIQGMILSPDASQVVQFQNGRCLIDGQLLG. Residues 227 to 545 are protruding domain; it reads QKTRAFTVPN…TARGRLGVRR (319 aa). The P2 sub-domain stretch occupies residues 280–416; it reads TTPATSGQLF…GSSLSQAANL (137 aa). Residues 417–546 are P1 sub-domain 2; that stretch reads APPVFPPGFG…ARGRLGVRRI (130 aa). The segment at 538–545 is plays a role in binding to host histo-blood group structures antigens and in the formation of P-particles; it reads RGRLGVRR.

It belongs to the caliciviridae capsid protein family. Homodimer. Homomultimer. Interacts with the minor capsid protein VP2. Interacts (via C-terminus) with host type I histo-blood group structures antigens at the surface of target cells. May be cleaved by host protease to generate soluble capsid protein. Assembled capsid cannot be cleaved.

It localises to the virion. It is found in the host cytoplasm. Its function is as follows. Capsid protein self assembles to form an icosahedral capsid with a T=3 symmetry, about 38 nm in diameter, and consisting of 180 capsid proteins. A smaller form of capsid with a diameter of 23 nm might be capsid proteins assembled as icosahedron with T=1 symmetry. The capsid encapsulates the genomic RNA and is decorated with VP2 proteins. Attaches virion to target cells by binding histo-blood group antigens (HBGAs) present on gastroduodenal epithelial cells. In terms of biological role, the soluble capsid protein may play a role in viral immunoevasion. This Southampton virus (strain GI/Human/United Kingdom/Southampton/1991) (SHV) protein is Capsid protein VP1.